The sequence spans 355 residues: Peptide chain release factor 1 (355 aa).

The residue at position 233 (Q233) is an N5-methylglutamine.

This sequence belongs to the prokaryotic/mitochondrial release factor family. In terms of processing, methylated by PrmC. Methylation increases the termination efficiency of RF1.

It is found in the cytoplasm. Its function is as follows. Peptide chain release factor 1 directs the termination of translation in response to the peptide chain termination codons UAG and UAA. This Dehalococcoides mccartyi (strain ATCC BAA-2100 / JCM 16839 / KCTC 5957 / BAV1) protein is Peptide chain release factor 1.